Consider the following 523-residue polypeptide: Translation initiation factor eIF2B subunit delta (523 aa).

The disordered stretch occupies residues 1–147; it reads MAAVAVAVRE…PSGVKRLPEY (147 aa). The residue at position 2 (Ala2) is an N-acetylalanine. Residue Ser12 is modified to Phosphoserine. The segment covering 30–40 has biased composition (basic and acidic residues); the sequence is EMTKEEKLQLR. Basic residues predominate over residues 41–51; it reads KEKKQQKKKRK. At Thr86 the chain carries Phosphothreonine. Basic and acidic residues predominate over residues 87–121; sequence PREKVPAGRSKAELRAERRAKQEAERALKQARKGE. Residue Ser130 is modified to Phosphoserine. The segment at 170 to 179 is may bind the chemical integrated stress response (ISR) inhibitor ISRIB; it reads RKDYGSKVSL.

Belongs to the eIF-2B alpha/beta/delta subunits family. As to quaternary structure, component of the translation initiation factor 2B (eIF2B) complex which is a heterodecamer of two sets of five different subunits: alpha, beta, gamma, delta and epsilon. Subunits alpha, beta and delta comprise a regulatory subcomplex and subunits epsilon and gamma comprise a catalytic subcomplex. Within the complex, the hexameric regulatory complex resides at the center, with the two heterodimeric catalytic subcomplexes bound on opposite sides.

Its subcellular location is the cytoplasm. It is found in the cytosol. Its activity is regulated as follows. Activated by the chemical integrated stress response (ISR) inhibitor ISRIB which stimulates guanine nucleotide exchange factor activity for both phosphorylated and unphosphorylated eIF2. In terms of biological role, acts as a component of the translation initiation factor 2B (eIF2B) complex, which catalyzes the exchange of GDP for GTP on eukaryotic initiation factor 2 (eIF2) gamma subunit. Its guanine nucleotide exchange factor activity is repressed when bound to eIF2 complex phosphorylated on the alpha subunit, thereby limiting the amount of methionyl-initiator methionine tRNA available to the ribosome and consequently global translation is repressed. This Homo sapiens (Human) protein is Translation initiation factor eIF2B subunit delta (EIF2B4).